We begin with the raw amino-acid sequence, 318 residues long: NADH-ubiquinone oxidoreductase chain 1 (318 aa).

The next 8 membrane-spanning stretches (helical) occupy residues 2 to 22 (FLIN…FLTL), 69 to 89 (FLFT…WAPL), 102 to 122 (LLFI…SGWA), 146 to 166 (MTTI…TAFA), 171 to 191 (HLWL…STLA), 222 to 242 (LFFM…VILF), 253 to 273 (EIST…FLWV), and 294 to 314 (LPLT…LACI).

This sequence belongs to the complex I subunit 1 family. As to quaternary structure, core subunit of respiratory chain NADH dehydrogenase (Complex I) which is composed of 45 different subunits.

It localises to the mitochondrion inner membrane. The enzyme catalyses a ubiquinone + NADH + 5 H(+)(in) = a ubiquinol + NAD(+) + 4 H(+)(out). Its function is as follows. Core subunit of the mitochondrial membrane respiratory chain NADH dehydrogenase (Complex I) which catalyzes electron transfer from NADH through the respiratory chain, using ubiquinone as an electron acceptor. Essential for the catalytic activity and assembly of complex I. This Elephas maximus (Indian elephant) protein is NADH-ubiquinone oxidoreductase chain 1 (MT-ND1).